The primary structure comprises 274 residues: 3-methyl-2-oxobutanoate hydroxymethyltransferase (274 aa).

Mg(2+) contacts are provided by D46 and D85. Residues 46 to 47, D85, and K115 contribute to the 3-methyl-2-oxobutanoate site; that span reads DS. Residue E117 coordinates Mg(2+). Catalysis depends on E184, which acts as the Proton acceptor.

It belongs to the PanB family. In terms of assembly, homodecamer; pentamer of dimers. It depends on Mg(2+) as a cofactor.

The protein resides in the cytoplasm. The catalysed reaction is 3-methyl-2-oxobutanoate + (6R)-5,10-methylene-5,6,7,8-tetrahydrofolate + H2O = 2-dehydropantoate + (6S)-5,6,7,8-tetrahydrofolate. Its pathway is cofactor biosynthesis; (R)-pantothenate biosynthesis; (R)-pantoate from 3-methyl-2-oxobutanoate: step 1/2. Functionally, catalyzes the reversible reaction in which hydroxymethyl group from 5,10-methylenetetrahydrofolate is transferred onto alpha-ketoisovalerate to form ketopantoate. The protein is 3-methyl-2-oxobutanoate hydroxymethyltransferase of Thermoanaerobacter pseudethanolicus (strain ATCC 33223 / 39E) (Clostridium thermohydrosulfuricum).